Consider the following 868-residue polypeptide: Leucine--tRNA ligase (868 aa).

Residues 42–52 (PYPSGKLHMGH) carry the 'HIGH' region motif. Positions 627–631 (KMSKS) match the 'KMSKS' region motif. K630 provides a ligand contact to ATP.

It belongs to the class-I aminoacyl-tRNA synthetase family.

Its subcellular location is the cytoplasm. It carries out the reaction tRNA(Leu) + L-leucine + ATP = L-leucyl-tRNA(Leu) + AMP + diphosphate. The sequence is that of Leucine--tRNA ligase from Pseudomonas syringae pv. syringae (strain B728a).